We begin with the raw amino-acid sequence, 1077 residues long: ATP-dependent helicase/deoxyribonuclease subunit B (1077 aa).

The protein belongs to the helicase family. AddB/RexB type 2 subfamily. As to quaternary structure, heterodimer of AddA and RexB. Mg(2+) is required as a cofactor.

The heterodimer acts as both an ATP-dependent DNA helicase and an ATP-dependent, dual-direction single-stranded exonuclease. Recognizes the chi site generating a DNA molecule suitable for the initiation of homologous recombination. This subunit has 5' -&gt; 3' nuclease activity but not helicase activity. This chain is ATP-dependent helicase/deoxyribonuclease subunit B, found in Streptococcus agalactiae serotype III (strain NEM316).